Reading from the N-terminus, the 168-residue chain is Ribosome maturation factor RimP (168 aa).

Belongs to the RimP family.

Its subcellular location is the cytoplasm. Required for maturation of 30S ribosomal subunits. This Bordetella parapertussis (strain 12822 / ATCC BAA-587 / NCTC 13253) protein is Ribosome maturation factor RimP.